Consider the following 643-residue polypeptide: Protein disulfide-isomerase A4 (643 aa).

Positions M1–A20 are cleaved as a signal peptide. Thioredoxin domains follow at residues V21–Q168 and N170–K300. The disordered stretch occupies residues A24–D54. Residues P27 to D54 show a composition bias toward acidic residues. The short motif at C90–C93 is the CXXC element. 2 cysteine pairs are disulfide-bonded: C90–C93 and C205–C208. K365 is subject to N6-acetyllysine. Positions F503–T634 constitute a Thioredoxin 3 domain. The CXXC signature appears at C553–C556. The cysteines at positions 553 and 556 are disulfide-linked. The short motif at K640–L643 is the Prevents secretion from ER element.

It belongs to the protein disulfide isomerase family. In terms of assembly, part of a large chaperone multiprotein complex comprising DNAJB11, HSP90B1, HSPA5, HYOU, PDIA2, PDIA4, PDIA6, PPIB, SDF2L1, UGGT1 and very small amounts of ERP29, but not, or at very low levels, CALR nor CANX. Component of a complex containing at least CRELD2, MANF, MATN3 and PDIA4.

It localises to the endoplasmic reticulum lumen. The protein resides in the melanosome. It carries out the reaction Catalyzes the rearrangement of -S-S- bonds in proteins.. The sequence is that of Protein disulfide-isomerase A4 (PDIA4) from Bos taurus (Bovine).